Here is a 124-residue protein sequence, read N- to C-terminus: Histone H2B, embryonic (124 aa).

A disordered region spans residues 1–31 (MAPTAQVAKKGSKKAVKGTKTAXGGKKRNRK). O-linked (GlcNAc) serine glycosylation is present at S111. K119 is covalently cross-linked (Glycyl lysine isopeptide (Lys-Gly) (interchain with G-Cter in ubiquitin)).

This sequence belongs to the histone H2B family. In terms of assembly, the nucleosome is a histone octamer containing two molecules each of H2A, H2B, H3 and H4 assembled in one H3-H4 heterotetramer and two H2A-H2B heterodimers. The octamer wraps approximately 147 bp of DNA. Post-translationally, monoubiquitination of Lys-119 gives a specific tag for epigenetic transcriptional activation and is also prerequisite for histone H3 'Lys-4' and 'Lys-79' methylation. In terms of processing, glcNAcylation at Ser-111 promotes monoubiquitination of Lys-119. It fluctuates in response to extracellular glucose, and associates with transcribed genes.

It localises to the nucleus. Its subcellular location is the chromosome. In terms of biological role, core component of nucleosome. Nucleosomes wrap and compact DNA into chromatin, limiting DNA accessibility to the cellular machineries which require DNA as a template. Histones thereby play a central role in transcription regulation, DNA repair, DNA replication and chromosomal stability. DNA accessibility is regulated via a complex set of post-translational modifications of histones, also called histone code, and nucleosome remodeling. This is Histone H2B, embryonic from Strongylocentrotus purpuratus (Purple sea urchin).